Reading from the N-terminus, the 356-residue chain is AT-hook motif nuclear-localized protein 1 (356 aa).

Positions 1 to 127 (MVLNMESTGE…PSHLPPPSSH (127 aa)) are disordered. Pro residues predominate over residues 49 to 66 (VTPPPPQPSSHHTAPPPL). Basic residues predominate over residues 88 to 97 (MKKKRGRPRK). A Bipartite nuclear localization signal motif is present at residues 89-97 (KKKRGRPRK). A DNA-binding region (a.T hook) is located at residues 89–101 (KKKRGRPRKYGPD). A compositionally biased stretch (low complexity) spans 106–118 (ALSPKPISSAPAP). The region spanning 167–309 (GGNFTPHIIT…KHDFMLSSPT (143 aa)) is the PPC domain. The interval 270 to 287 (GLLVAASPVQVVVGSFLA) is required for nuclear localization. Positions 295–302 (KPKKNKHD) match the Nuclear localization signal motif.

The protein resides in the nucleus. It localises to the nucleoplasm. It is found in the chromosome. Its function is as follows. Transcription factor that specifically binds AT-rich DNA sequences related to the nuclear matrix attachment regions (MARs). May play a function in the positioning of chromatin fibers within the nucleus. This chain is AT-hook motif nuclear-localized protein 1, found in Arabidopsis thaliana (Mouse-ear cress).